Here is a 93-residue protein sequence, read N- to C-terminus: Large ribosomal subunit protein bL31B (93 aa).

It belongs to the bacterial ribosomal protein bL31 family. Type B subfamily. In terms of assembly, part of the 50S ribosomal subunit.

The chain is Large ribosomal subunit protein bL31B from Psychrobacter cryohalolentis (strain ATCC BAA-1226 / DSM 17306 / VKM B-2378 / K5).